The chain runs to 191 residues: Adenylate kinase (191 aa).

12–17 is an ATP binding site; the sequence is GSGKTT. Positions 34–63 are NMP; that stretch reads STGDLLRAESAKKTERGLLIEKFTSQGELV. AMP is bound by residues T35, R40, 61 to 63, 88 to 91, and Q95; these read ELV and GYPR. An LID region spans residues 130–136; that stretch reads GRSRGAD. Residue R131 participates in ATP binding. Residues R133 and R145 each coordinate AMP. Position 173 (R173) interacts with ATP.

It belongs to the adenylate kinase family. As to quaternary structure, monomer.

It localises to the cytoplasm. The enzyme catalyses AMP + ATP = 2 ADP. Its pathway is purine metabolism; AMP biosynthesis via salvage pathway; AMP from ADP: step 1/1. Catalyzes the reversible transfer of the terminal phosphate group between ATP and AMP. Plays an important role in cellular energy homeostasis and in adenine nucleotide metabolism. This chain is Adenylate kinase, found in Helicobacter pylori (strain ATCC 700392 / 26695) (Campylobacter pylori).